A 171-amino-acid polypeptide reads, in one-letter code: Stage III sporulation protein AB (171 aa).

The protein is Stage III sporulation protein AB (spoIIIAB) of Bacillus subtilis (strain 168).